An 87-amino-acid polypeptide reads, in one-letter code: Small ribosomal subunit protein uS19 (87 aa).

It belongs to the universal ribosomal protein uS19 family.

In terms of biological role, protein S19 forms a complex with S13 that binds strongly to the 16S ribosomal RNA. The polypeptide is Small ribosomal subunit protein uS19 (Mesoplasma florum (strain ATCC 33453 / NBRC 100688 / NCTC 11704 / L1) (Acholeplasma florum)).